We begin with the raw amino-acid sequence, 413 residues long: CinA-like protein (413 aa).

This sequence belongs to the CinA family.

This is CinA-like protein from Geotalea daltonii (strain DSM 22248 / JCM 15807 / FRC-32) (Geobacter daltonii).